Reading from the N-terminus, the 365-residue chain is 3,4-dihydroxy-2-butanone 4-phosphate synthase (365 aa).

The tract at residues 1-201 (MALNTIDELI…IADLIHYRLI (201 aa)) is DHBP synthase. Residues 27 to 28 (RE), Asp32, 140 to 144 (RAGHT), and Glu164 contribute to the D-ribulose 5-phosphate site. Residue Glu28 coordinates Mg(2+). His143 provides a ligand contact to Mg(2+). The GTP cyclohydrolase II-like stretch occupies residues 202–365 (HERTVERIAE…LEVVEYLPAE (164 aa)).

It in the N-terminal section; belongs to the DHBP synthase family. The protein in the C-terminal section; belongs to the GTP cyclohydrolase II family. Mg(2+) serves as cofactor. Mn(2+) is required as a cofactor.

It carries out the reaction D-ribulose 5-phosphate = (2S)-2-hydroxy-3-oxobutyl phosphate + formate + H(+). Its pathway is cofactor biosynthesis; riboflavin biosynthesis; 2-hydroxy-3-oxobutyl phosphate from D-ribulose 5-phosphate: step 1/1. In terms of biological role, catalyzes the conversion of D-ribulose 5-phosphate to formate and 3,4-dihydroxy-2-butanone 4-phosphate. This Pseudomonas aeruginosa (strain ATCC 15692 / DSM 22644 / CIP 104116 / JCM 14847 / LMG 12228 / 1C / PRS 101 / PAO1) protein is 3,4-dihydroxy-2-butanone 4-phosphate synthase (ribB).